A 319-amino-acid chain; its full sequence is Probable cell division protein WhiA (319 aa).

The H-T-H motif DNA-binding region spans 278 to 311 (SLKELGQMLNPPVGKSGVNHRLRRLESLAEAFSR).

Belongs to the WhiA family.

Involved in cell division and chromosome segregation. The polypeptide is Probable cell division protein WhiA (Heliobacterium modesticaldum (strain ATCC 51547 / Ice1)).